The following is a 419-amino-acid chain: Mitogen-activated protein kinase spm1 (419 aa).

Residues 23-314 (YTVTKELGQG…VEEALEHPYL (292 aa)) form the Protein kinase domain. ATP is bound by residues 29-37 (LGQGAYGIV) and K52. D149 acts as the Proton acceptor in catalysis.

This sequence belongs to the protein kinase superfamily. Ser/Thr protein kinase family. MAP kinase subfamily. Mg(2+) is required as a cofactor. Phosphorylated by the MAP kinase kinase mkk1.

The enzyme catalyses L-seryl-[protein] + ATP = O-phospho-L-seryl-[protein] + ADP + H(+). It catalyses the reaction L-threonyl-[protein] + ATP = O-phospho-L-threonyl-[protein] + ADP + H(+). Its function is as follows. Mitogen-activated protein kinase, part of the mkh1-mkk1-spm1 MAPK cascade that regulates vegetative growth, conidial formation, colony surface hydrophobicity, osmotic stress, cell wall integrity maintenance, carbon and nitrogen source utilization, chitin distribution, septa formation, and pathogenicity. The polypeptide is Mitogen-activated protein kinase spm1 (Cytospora mali (Apple Valsa canker fungus)).